The primary structure comprises 504 residues: Carnosic acid synthase (504 aa).

A helical transmembrane segment spans residues F4–Y24. C447 is a heme binding site.

This sequence belongs to the cytochrome P450 family. Heme is required as a cofactor. In terms of tissue distribution, expressed in glandular trichomes of young leaves.

The protein resides in the membrane. The enzyme catalyses 11-hydroxyferruginol + 3 reduced [NADPH--hemoprotein reductase] + 3 O2 = carnosate + 3 oxidized [NADPH--hemoprotein reductase] + 4 H2O + 4 H(+). It carries out the reaction miltiradiene + 2 reduced [NADPH--hemoprotein reductase] + 2 O2 = miltiradien-20-al + 2 oxidized [NADPH--hemoprotein reductase] + 3 H2O + 2 H(+). The catalysed reaction is ferruginol + 3 reduced [NADPH--hemoprotein reductase] + 3 O2 = pisiferate + 3 oxidized [NADPH--hemoprotein reductase] + 4 H2O + 4 H(+). It functions in the pathway secondary metabolite biosynthesis; terpenoid biosynthesis. Functionally, monooxygenase involved in the biosynthesis of carnosate, a potent antioxidant labdane-related diterpene natural products. Catalyzes the oxidation of 11-hydroxyferruginol to produce carnosate. Mediates the conversion of miltiradien into miltiradien-20-al. Also involved in the production of pisiferic acid and derivative products from ferruginol. In Rosmarinus officinalis (Rosemary), this protein is Carnosic acid synthase.